The following is a 59-amino-acid chain: Small, acid-soluble spore protein H (59 aa).

The protein belongs to the SspH family.

It is found in the spore core. This is Small, acid-soluble spore protein H from Bacillus cereus (strain ZK / E33L).